The following is a 194-amino-acid chain: ECF RNA polymerase sigma factor SigX (194 aa).

The Polymerase core binding signature appears at 32-45 (DLLQEVYIRVLNSY). Residues 136-155 (IQETAKALRFSESKVKTTQH) constitute a DNA-binding region (H-T-H motif).

The protein belongs to the sigma-70 factor family. ECF subfamily. In terms of assembly, interacts transiently with the RNAP core.

Its subcellular location is the cell membrane. In terms of biological role, sigma factors are initiation factors that promote the attachment of RNA polymerase (RNAP) to specific initiation sites and are then released. May be involved in the regulation of iron metabolism. Associates with RNAP core during early growth phases, association decreases as cells age. This chain is ECF RNA polymerase sigma factor SigX (sigX), found in Bacillus subtilis (strain 168).